Here is a 257-residue protein sequence, read N- to C-terminus: 3-alpha-hydroxysteroid dehydrogenase/carbonyl reductase (257 aa).

Residues 8 to 13, Asp-32, 41 to 42, and Gly-71 contribute to the NAD(+) site; these read GCATGI and DL. Residue Ser-114 participates in substrate binding. The NAD(+) site is built by Tyr-155 and Lys-159. The active-site Proton acceptor is Tyr-155.

This sequence belongs to the short-chain dehydrogenases/reductases (SDR) family. Homodimer.

Its subcellular location is the cytoplasm. The catalysed reaction is a 3alpha-hydroxysteroid + NADP(+) = a 3-oxosteroid + NADPH + H(+). It catalyses the reaction a 3alpha-hydroxysteroid + NAD(+) = a 3-oxosteroid + NADH + H(+). Functionally, catalyzes the reversible interconversion of hydroxy and oxo groups at position 3 of the steroid nucleus. Along with the 3 alpha-hydroxysteroid dehydrogenase and 3-oxo-reductase activities towards a variety of cis or trans fused A/B ring steroids, it also reduces several xenobiotic carbonyl compounds, including a metyrapone-based class of insecticides, to the respective alcohol metabolites. No detectable activity on testosterone, progesterone or 3-oxo-desogestrel. The protein is 3-alpha-hydroxysteroid dehydrogenase/carbonyl reductase (hsdA) of Comamonas testosteroni (Pseudomonas testosteroni).